A 178-amino-acid chain; its full sequence is MAMYGGQIHLIIGPMFAGKSTELIRLVKRYQIARYKCLVVKYEKDARYGNGVRTHDNTCISAVPTASLDDVESISEHVEVIGIDEGQFFPNIVSFCERMANAGKVLIVAALDGTFQRKPFTNICELIPLAENVTKLNAVCMYCYKDASFSKRLGNETEIEIIGGSDKYKSVCRKCYFF.

Residue 13–20 coordinates ATP; sequence GPMFAGKS. Glutamate 85 functions as the Proton acceptor in the catalytic mechanism. Phenylalanine 115 contributes to the substrate binding site. Zn(2+) is bound by residues cysteine 140 and cysteine 143. 159-163 lines the substrate pocket; it reads IEIIG. Zn(2+) contacts are provided by cysteine 172 and cysteine 175.

This sequence belongs to the thymidine kinase family.

The enzyme catalyses thymidine + ATP = dTMP + ADP + H(+). The protein is Thymidine kinase (TK) of Myxoma virus (strain Lausanne) (MYXV).